The chain runs to 296 residues: Cytochrome bc1 complex cytochrome c subunit (296 aa).

Polar residues predominate over residues 1–19 (MMETNPQTSEGAGKAQSSA). The interval 1 to 27 (MMETNPQTSEGAGKAQSSAKKVKNRRK) is disordered. A helical membrane pass occupies residues 32 to 52 (VAGAMALTIGLSGAGILATAI). Cytochrome c domains are found at residues 67 to 147 (ALIA…AANG) and 177 to 255 (LDVS…KSTK). Heme c contacts are provided by C80, C83, H84, C190, C193, and H194. The helical transmembrane segment at 274-294 (GLFMWGIGIMVLIAAAMWIGS) threads the bilayer.

The cytochrome bc1 complex is composed of a cytochrome b (QcrB), the Rieske iron-sulfur protein (QcrA) and a diheme cytochrome c (QcrC) subunit. The bc1 complex forms a supercomplex with cytochrome c oxidase (cytochrome aa3). Binds 2 heme c groups covalently per subunit.

It localises to the cell membrane. It catalyses the reaction a quinol + 2 Fe(III)-[cytochrome c](out) = a quinone + 2 Fe(II)-[cytochrome c](out) + 2 H(+)(out). Its function is as follows. Cytochrome c1 subunit of the cytochrome bc1 complex, an essential component of the respiratory electron transport chain required for ATP synthesis. The bc1 complex catalyzes the oxidation of menaquinol and the reduction of cytochrome c in the respiratory chain. The bc1 complex operates through a Q-cycle mechanism that couples electron transfer to generation of the proton gradient that drives ATP synthesis. The protein is Cytochrome bc1 complex cytochrome c subunit (qcrC) of Corynebacterium efficiens (strain DSM 44549 / YS-314 / AJ 12310 / JCM 11189 / NBRC 100395).